A 395-amino-acid polypeptide reads, in one-letter code: Tryptophan--tRNA ligase, cytoplasmic (395 aa).

The 'HIGH' region signature appears at 91-100 (PSSDSMHLGH). A 'KMSKS' region motif is present at residues 275–279 (KMSAS). A phosphothreonine mark is found at T288 and T290.

Belongs to the class-I aminoacyl-tRNA synthetase family.

The protein localises to the cytoplasm. The catalysed reaction is tRNA(Trp) + L-tryptophan + ATP = L-tryptophyl-tRNA(Trp) + AMP + diphosphate + H(+). The polypeptide is Tryptophan--tRNA ligase, cytoplasmic (wrs1) (Schizosaccharomyces pombe (strain 972 / ATCC 24843) (Fission yeast)).